Consider the following 76-residue polypeptide: Small ribosomal subunit protein bS18 (76 aa).

Belongs to the bacterial ribosomal protein bS18 family. In terms of assembly, part of the 30S ribosomal subunit. Forms a tight heterodimer with protein bS6.

Binds as a heterodimer with protein bS6 to the central domain of the 16S rRNA, where it helps stabilize the platform of the 30S subunit. The protein is Small ribosomal subunit protein bS18 of Pseudomonas aeruginosa (strain LESB58).